A 599-amino-acid polypeptide reads, in one-letter code: Aspartate--tRNA(Asp/Asn) ligase (599 aa).

E183 serves as a coordination point for L-aspartate. An aspartate region spans residues 207–210; the sequence is QIFK. R229 is a binding site for L-aspartate. ATP contacts are provided by residues 229–231 and Q238; that span reads RDE. H456 contacts L-aspartate. ATP is bound at residue E490. R497 lines the L-aspartate pocket. 542–545 contacts ATP; that stretch reads GLDR.

It belongs to the class-II aminoacyl-tRNA synthetase family. Type 1 subfamily. In terms of assembly, homodimer.

Its subcellular location is the cytoplasm. The catalysed reaction is tRNA(Asx) + L-aspartate + ATP = L-aspartyl-tRNA(Asx) + AMP + diphosphate. Its function is as follows. Aspartyl-tRNA synthetase with relaxed tRNA specificity since it is able to aspartylate not only its cognate tRNA(Asp) but also tRNA(Asn). Reaction proceeds in two steps: L-aspartate is first activated by ATP to form Asp-AMP and then transferred to the acceptor end of tRNA(Asp/Asn). In Protochlamydia amoebophila (strain UWE25), this protein is Aspartate--tRNA(Asp/Asn) ligase.